A 513-amino-acid polypeptide reads, in one-letter code: Histidine ammonia-lyase (513 aa).

The segment at residues 143-145 (ASG) is a cross-link (5-imidazolinone (Ala-Gly)). Position 144 is a 2,3-didehydroalanine (Ser) (S144).

Belongs to the PAL/histidase family. In terms of processing, contains an active site 4-methylidene-imidazol-5-one (MIO), which is formed autocatalytically by cyclization and dehydration of residues Ala-Ser-Gly.

The protein resides in the cytoplasm. It carries out the reaction L-histidine = trans-urocanate + NH4(+). Its pathway is amino-acid degradation; L-histidine degradation into L-glutamate; N-formimidoyl-L-glutamate from L-histidine: step 1/3. The sequence is that of Histidine ammonia-lyase from Xanthomonas campestris pv. campestris (strain B100).